Here is a 642-residue protein sequence, read N- to C-terminus: Threonine--tRNA ligase (642 aa).

The TGS domain occupies 1 to 61 (MPVITLPDGS…ETDAELSIIT (61 aa)). The segment at 243-534 (DHRKIGKQLD…LIEEYAGRFP (292 aa)) is catalytic. Zn(2+) is bound by residues Cys-334, His-385, and His-511.

It belongs to the class-II aminoacyl-tRNA synthetase family. As to quaternary structure, homodimer. Requires Zn(2+) as cofactor.

It localises to the cytoplasm. The enzyme catalyses tRNA(Thr) + L-threonine + ATP = L-threonyl-tRNA(Thr) + AMP + diphosphate + H(+). In terms of biological role, catalyzes the attachment of threonine to tRNA(Thr) in a two-step reaction: L-threonine is first activated by ATP to form Thr-AMP and then transferred to the acceptor end of tRNA(Thr). Also edits incorrectly charged L-seryl-tRNA(Thr). In Shewanella oneidensis (strain ATCC 700550 / JCM 31522 / CIP 106686 / LMG 19005 / NCIMB 14063 / MR-1), this protein is Threonine--tRNA ligase.